The primary structure comprises 325 residues: Helicase VP6-A (325 aa).

Disordered regions lie at residues methionine 1–arginine 126 and glycine 175–isoleucine 231. 4 stretches are compositionally biased toward basic and acidic residues: residues valine 8 to glutamine 18, glutamate 32 to glutamate 54, glycine 61 to isoleucine 79, and proline 92 to glycine 105. Lysine 106 lines the ATP pocket. Residues lysine 106–glycine 122 are compositionally biased toward gly residues. A compositionally biased stretch (basic and acidic residues) spans glycine 175–alanine 229.

Belongs to the orbivirus VP6 family. In terms of assembly, homohexamer.

The protein resides in the virion. It carries out the reaction ATP + H2O = ADP + phosphate + H(+). In terms of biological role, ATP dependent RNA helicase essential for RNA packaging and viral transcription. Possesses ss- and dsRNA-binding capacity. The protein is Helicase VP6-A (Segment-9) of Bluetongue virus 11 (isolate USA) (BTV 11).